The sequence spans 156 residues: Arginine repressor (156 aa).

This sequence belongs to the ArgR family.

It localises to the cytoplasm. It functions in the pathway amino-acid biosynthesis; L-arginine biosynthesis [regulation]. Regulates arginine biosynthesis genes. The polypeptide is Arginine repressor (Citrobacter koseri (strain ATCC BAA-895 / CDC 4225-83 / SGSC4696)).